The following is an 826-amino-acid chain: MKEYQPQKIESKWQKRWQDEISYETEVDHNKDKYYVLEMFPYPSGKLHMGHMRVYSIGDVLARFQRMRGYNVLHPMGWDAFGLPAENAAIENQDLPSRWTYANIDNMKDQLQALGTSYDWKREVSTCSPDYYKWTQWMFLQLYKNGLAYKKKAPVNWCPECETVLANEQVENGACWRCDSMVEQKQLSQWFFKITEYADRLDQDLELLEEWPDRVKTMQKNWIGKSQGTEIDFPVKGSREKIRAFTTRPDTIFGATYMVLAPEHPMTEQLVQGTDQEKEVMDFIKGVHEMGKEAREAEDLEKEGVFTGRWAINPLNGEEIPILVGNYVLMEYGTGAIMAVPAHDQRDFQFAHKYNLPIKEVVTPPEGEGKTESETHDELKKAYTDHGILINSPGYNGMTSEQAIEQITRDIENKGIGAGVTTYRLRDWLVSRQRYWGAPIPVLYCDQCGILPVPEDELPVQLPEDVDFSQGSRNVLAARQDFVETSCPQCGGSAQRETDTMDTFVCSSWYFLRYTTPWDNEVPFRQEDVNYWMPVDQYIGGIEHAVLHLLYARFFTKVMYDQGYTNFKEPFSRLLAQGMVNKDGAKMSKSKGNVVSPDEILRTYGADTGRLFILFAAPPEKDLDWNDEGVEGCYRFLQRLYRLVNDNQNLVDLQLDDTKFTKEDKEYHRLIHKTIKKVTDDISERHNFNTAISAIMELTNASSKYKEQKEVNESLLRTGLETIVMLLAPFTPHIAEELWETLGYQDSVHKLNWPSYDEKAMVAEEAEMVVQVNGKVRDHLTVPADSSEETIKEKALEREKVQKYISGAEIKKVIVIPQKLVNIVCK.

Positions 41 to 51 (PYPSGKLHMGH) match the 'HIGH' region motif. The short motif at 586-590 (KMSKS) is the 'KMSKS' region element. Lys-589 serves as a coordination point for ATP.

Belongs to the class-I aminoacyl-tRNA synthetase family.

It localises to the cytoplasm. It catalyses the reaction tRNA(Leu) + L-leucine + ATP = L-leucyl-tRNA(Leu) + AMP + diphosphate. In Natranaerobius thermophilus (strain ATCC BAA-1301 / DSM 18059 / JW/NM-WN-LF), this protein is Leucine--tRNA ligase.